The chain runs to 317 residues: Putative 2-hydroxyacid dehydrogenase SA2098 (317 aa).

Residues 155 to 156, 234 to 236, and Asp-260 contribute to the NAD(+) site; these read EI and ASR. Arg-236 is an active-site residue. Glu-265 is an active-site residue. The active-site Proton donor is the His-283. 283 to 286 serves as a coordination point for NAD(+); it reads HIGN.

Belongs to the D-isomer specific 2-hydroxyacid dehydrogenase family.

In Staphylococcus aureus (strain N315), this protein is Putative 2-hydroxyacid dehydrogenase SA2098.